Reading from the N-terminus, the 115-residue chain is uncharacterized protein (115 aa).

One can recognise an MSP domain in the interval 1–115 (MGVEISLDPP…ETVIKLSAAE (115 aa)).

This is an uncharacterized protein from Caenorhabditis elegans.